A 1078-amino-acid polypeptide reads, in one-letter code: MINAKKMLGDGKEGTSTIPGFNQIQFEGFYRFIDQGLIEELSKFPKIEDIDHEIEFQLFVETYQLVEPLIKERDAVYESLTYSSELYVSAGLIWKTNRNMQEQRIFIGNIPLMNSLGTSIVNGIYRVVINQILQSPGIYYQSELDHNGISVYTGTIISDWGGRLELEIDKKARIWARVSRKQKISILVLSSAMGSNLREILENVCYPEIFLSFLTDKEKKKIGSKENAILEFYQQFSCVGGDPIFSESLCKELQKKFFHQRCELGRIGRRNINWRLNLNIPQNNIFLLPRDILAAADHLIGMKFGMGTLDDMNHLKNKRIRSVADLLQDQLGLALARLENVVKGTIGGAIRHKLIPPTQNLVTSTPLTTTYESFFGFHPLSQVLDRTNPLTQIVHGRKLSYLGPGGLTGRTANFRIRDIHPSHYGRICPIDTSEGINVGLIGSLSIHARIGDWGSLESPFYELVEKSKKAQIRMLFLSPSQDEYYMIAAGNSLALNRGIQEEQVVPARYRQEFLTIAWEEVHLRSIFPFQYFSIGASLIPFIEHNDANRALMSSNMQRQAVPLSRSEKCIVGTGLERQVALDSGVPAIAEHEGKILYTDTEKIILSGNENTLSIPLIMYQRSNKNTCMHQKPQVPRGKCIKKGQILADGAATVGGELALGKNVLVAYMPWEGYNFEDAVLISECLVYGDIYTSFHIRKYEIQTHVTTQGPERITKEIPHLEGRLLRNLDKNGIVMLGSWVETGDILVGKLTPQVAKESSYAPEDRLLRAILGIQVSTSKETCLKLPIGGRGRVIDVRWVQKKGGSSYNPEIIRVYISQKREIKVGDKVAGRHGNKGIISKILPRQDMPYLQDGRPVDMVFNPLGVPSRMNVGQIFECSLGLAGSLLDRHYRIAPFDERYEQEASRKLVFSELYEASKQTANPWVFEPEYPGKSRIFDGRTGDPFEQPVIIGKPYILKLIHQVDDKIHGRSSGHYALVTQQPLRGRSKQGGQRVGEMEVWALEGFGVAHILQEMLTYKSDHIRARQEVLGTTIIGGTIPKPEDAPESFRLLVRELRSLALELNHFLVSEKNFQINRKEV.

The protein belongs to the RNA polymerase beta chain family. As to quaternary structure, the minimal PEP RNA polymerase found in etioplasts (PEP-B) is composed of four subunits: alpha, beta, beta', and beta''. Following differentiation into chloroplasts the PEP-A RNA polymerase in this organism has been shown to be composed of at least 13 subunits, including the PEP-B subunits. When a (nuclear-encoded) sigma factor is associated with the core the holoenzyme is formed, which can initiate transcription.

The protein resides in the plastid. It localises to the chloroplast. It catalyses the reaction RNA(n) + a ribonucleoside 5'-triphosphate = RNA(n+1) + diphosphate. Its function is as follows. DNA-dependent RNA polymerase catalyzes the transcription of DNA into RNA using the four ribonucleoside triphosphates as substrates. The chain is DNA-directed RNA polymerase subunit beta (rpoB) from Sinapis alba (White mustard).